The sequence spans 148 residues: MGKQLRQMKIKEILHNHDVGNQNDLIRLLDKAGIEVAQATLSRDCTELGIIRSRTHQGFRLVLPEDSPGQIIRGLVGMEVQSISSNETAIVIKTLPGRAHGVASFLDQLKDIAILGTIAGDDTVLVIPLSIKDIASIIHDIQSNLSQT.

The protein belongs to the ArgR family.

Its subcellular location is the cytoplasm. Its pathway is amino-acid biosynthesis; L-arginine biosynthesis [regulation]. Its function is as follows. Regulates arginine biosynthesis genes. The protein is Arginine repressor of Prosthecochloris aestuarii (strain DSM 271 / SK 413).